The following is a 116-amino-acid chain: Large ribosomal subunit protein P2 (116 aa).

Positions glycine 60–aspartate 116 are disordered. Residues serine 67–alanine 87 show a composition bias toward gly residues. The span at alanine 91–glutamate 101 shows a compositional bias: basic and acidic residues.

This sequence belongs to the eukaryotic ribosomal protein P1/P2 family. In terms of assembly, P1 and P2 exist as dimers at the large ribosomal subunit. Post-translationally, phosphorylated.

Plays an important role in the elongation step of protein synthesis. The polypeptide is Large ribosomal subunit protein P2 (Branchiostoma floridae (Florida lancelet)).